A 203-amino-acid chain; its full sequence is Small ribosomal subunit protein uS4 (203 aa).

In terms of domain architecture, S4 RNA-binding spans 93–156 (RRLDNVVYRL…LKVPAILEAV (64 aa)).

The protein belongs to the universal ribosomal protein uS4 family. Part of the 30S ribosomal subunit. Contacts protein S5. The interaction surface between S4 and S5 is involved in control of translational fidelity.

Functionally, one of the primary rRNA binding proteins, it binds directly to 16S rRNA where it nucleates assembly of the body of the 30S subunit. Its function is as follows. With S5 and S12 plays an important role in translational accuracy. This chain is Small ribosomal subunit protein uS4, found in Streptococcus gordonii (strain Challis / ATCC 35105 / BCRC 15272 / CH1 / DL1 / V288).